The following is a 614-amino-acid chain: DNA mismatch repair protein MutL (614 aa).

The interval 355–411 (PLSTGRVSEADPSNYATQSKFDEKPRESGSQGQSSSISAPSSYSRGGEYSARSQPEL) is disordered. Over residues 382–401 (SGSQGQSSSISAPSSYSRGG) the composition is skewed to low complexity.

This sequence belongs to the DNA mismatch repair MutL/HexB family.

Its function is as follows. This protein is involved in the repair of mismatches in DNA. It is required for dam-dependent methyl-directed DNA mismatch repair. May act as a 'molecular matchmaker', a protein that promotes the formation of a stable complex between two or more DNA-binding proteins in an ATP-dependent manner without itself being part of a final effector complex. This Shewanella woodyi (strain ATCC 51908 / MS32) protein is DNA mismatch repair protein MutL.